Here is a 472-residue protein sequence, read N- to C-terminus: Threonine synthase-like 2 (472 aa).

Lys-113 bears the N6-(pyridoxal phosphate)lysine mark.

It belongs to the threonine synthase family. Pyridoxal 5'-phosphate serves as cofactor.

Acts as a catabolic phospho-lyase on both gamma- and beta-phosphorylated substrates. Degrades O-phospho-threonine (PThr) to alpha-ketobutyrate, ammonia and phosphate. This Xenopus laevis (African clawed frog) protein is Threonine synthase-like 2 (thnsl2).